The primary structure comprises 322 residues: MSYSNLKLFALSSNKELAEKVAKTIGISLGKSTVRQFSDGEIQVNIEESIRGNHVFILQSTSSPVNDNLMEILIMVDALKRASAETVSVVMPYYGYARQDRKARSREPITSKLVANMLAVAGVDRLLTVDLHAAQIQGFFDIPVDHLMGAPLIADYFVRRGMCGSDYVVVSPDHGGVTRARKLAQFLQTPIAIIDKRRNVNKMNTSEVMNIIGNVSGKTCILIDDMIDTAGTIAHAADALAEAGATAVYASCTHPVLSGSALDNIQNSAIEKLVVLDTIDLPEEKLIDKIEQISITDLISEAIIRIHEKRPLSPLFEFTTFN.

ATP-binding positions include 39–41 (DGE) and 98–99 (RQ). Mg(2+) is bound by residues histidine 132 and aspartate 173. Residue lysine 196 is part of the active site. Residues arginine 198, aspartate 224, and 228 to 232 (DTAGT) each bind D-ribose 5-phosphate.

Belongs to the ribose-phosphate pyrophosphokinase family. Class I subfamily. In terms of assembly, homohexamer. Requires Mg(2+) as cofactor.

The protein resides in the cytoplasm. The enzyme catalyses D-ribose 5-phosphate + ATP = 5-phospho-alpha-D-ribose 1-diphosphate + AMP + H(+). The protein operates within metabolic intermediate biosynthesis; 5-phospho-alpha-D-ribose 1-diphosphate biosynthesis; 5-phospho-alpha-D-ribose 1-diphosphate from D-ribose 5-phosphate (route I): step 1/1. Involved in the biosynthesis of the central metabolite phospho-alpha-D-ribosyl-1-pyrophosphate (PRPP) via the transfer of pyrophosphoryl group from ATP to 1-hydroxyl of ribose-5-phosphate (Rib-5-P). This Streptococcus mutans serotype c (strain ATCC 700610 / UA159) protein is Ribose-phosphate pyrophosphokinase 1.